A 779-amino-acid polypeptide reads, in one-letter code: Endonuclease MutS2 (779 aa).

Residue 328-335 coordinates ATP; it reads GPNTGGKT. The Smr domain occupies 704–779; it reads LDLRGKRYEE…GSGATIVTLG (76 aa).

It belongs to the DNA mismatch repair MutS family. MutS2 subfamily. In terms of assembly, homodimer. Binds to stalled ribosomes, contacting rRNA.

Functionally, endonuclease that is involved in the suppression of homologous recombination and thus may have a key role in the control of bacterial genetic diversity. In terms of biological role, acts as a ribosome collision sensor, splitting the ribosome into its 2 subunits. Detects stalled/collided 70S ribosomes which it binds and splits by an ATP-hydrolysis driven conformational change. Acts upstream of the ribosome quality control system (RQC), a ribosome-associated complex that mediates the extraction of incompletely synthesized nascent chains from stalled ribosomes and their subsequent degradation. Probably generates substrates for RQC. This Streptococcus pyogenes serotype M1 protein is Endonuclease MutS2.